The sequence spans 334 residues: Glutaminase (334 aa).

7 residues coordinate substrate: Ser-76, Asn-126, Glu-170, Asn-177, Tyr-201, Tyr-253, and Val-271.

It belongs to the glutaminase family. Homotetramer.

It catalyses the reaction L-glutamine + H2O = L-glutamate + NH4(+). The polypeptide is Glutaminase (Nostoc sp. (strain PCC 7120 / SAG 25.82 / UTEX 2576)).